Here is a 686-residue protein sequence, read N- to C-terminus: Forkhead box protein P1 (686 aa).

2 stretches are compositionally biased toward polar residues: residues 1–19 (MMQESGTETKSNGSAIQNG) and 279–292 (IINPHASTNGQLSV). Disordered stretches follow at residues 1 to 23 (MMQESGTETKSNGSAIQNGASGG) and 279 to 306 (IINPHASTNGQLSVHTPKRESLSHEEHS). Residues 295 to 306 (PKRESLSHEEHS) show a composition bias toward basic and acidic residues. Residues 315–340 (GVCKWPGCEAVCEDFQSFLKHLNSEH) form a C2H2-type zinc finger. The tract at residues 357 to 378 (VQQLELQLAKDKERLQAMMTHL) is leucine-zipper. Residues 391-395 (PLNLV) form a CTBP1-binding region. The span at 403–412 (TASEASPQSL) shows a compositional bias: polar residues. Positions 403–440 (TASEASPQSLPHTPTTPTAPITPVTQGPSVITTTSMHN) are disordered. Low complexity predominate over residues 413–427 (PHTPTTPTAPITPVT). Polar residues predominate over residues 428 to 439 (QGPSVITTTSMH). The fork-head DNA-binding region spans 474-564 (RPPFTYASLI…PQKISGNPSL (91 aa)). The tract at residues 619–686 (MEHTNSNGSD…EDEPVNEDIE (68 aa)) is disordered. A compositionally biased stretch (polar residues) spans 621-632 (HTNSNGSDSSPG). Residues 676–686 (YEDEPVNEDIE) show a composition bias toward acidic residues.

The protein resides in the nucleus. Functionally, transcriptional repressor. The chain is Forkhead box protein P1 (FOXP1) from Gallus gallus (Chicken).